A 693-amino-acid polypeptide reads, in one-letter code: Elongation factor G (693 aa).

Residues 8 to 282 (EKFRNFGIMA…AVVDYLPSPI (275 aa)) enclose the tr-type G domain. Residues 17-24 (AHIDAGKT), 81-85 (DTPGH), and 135-138 (NKMD) each bind GTP.

This sequence belongs to the TRAFAC class translation factor GTPase superfamily. Classic translation factor GTPase family. EF-G/EF-2 subfamily.

It is found in the cytoplasm. Its function is as follows. Catalyzes the GTP-dependent ribosomal translocation step during translation elongation. During this step, the ribosome changes from the pre-translocational (PRE) to the post-translocational (POST) state as the newly formed A-site-bound peptidyl-tRNA and P-site-bound deacylated tRNA move to the P and E sites, respectively. Catalyzes the coordinated movement of the two tRNA molecules, the mRNA and conformational changes in the ribosome. This chain is Elongation factor G, found in Mycoplasmoides gallisepticum (strain R(low / passage 15 / clone 2)) (Mycoplasma gallisepticum).